Here is a 562-residue protein sequence, read N- to C-terminus: NAD-dependent malic enzyme (562 aa).

Y101 serves as the catalytic Proton donor. NAD(+) is bound at residue R154. Residue K172 is the Proton acceptor of the active site. The a divalent metal cation site is built by E243, D244, and D267. 2 residues coordinate NAD(+): D267 and N415.

It belongs to the malic enzymes family. In terms of assembly, homotetramer. Mg(2+) serves as cofactor. Requires Mn(2+) as cofactor.

It carries out the reaction (S)-malate + NAD(+) = pyruvate + CO2 + NADH. The catalysed reaction is oxaloacetate + H(+) = pyruvate + CO2. The chain is NAD-dependent malic enzyme from Aliivibrio fischeri (strain MJ11) (Vibrio fischeri).